The sequence spans 102 residues: Small ribosomal subunit protein uS10 (102 aa).

Belongs to the universal ribosomal protein uS10 family. Part of the 30S ribosomal subunit.

Its function is as follows. Involved in the binding of tRNA to the ribosomes. This Streptococcus pyogenes serotype M12 (strain MGAS2096) protein is Small ribosomal subunit protein uS10.